Reading from the N-terminus, the 185-residue chain is Elongation factor P (185 aa).

It belongs to the elongation factor P family.

The protein localises to the cytoplasm. The protein operates within protein biosynthesis; polypeptide chain elongation. In terms of biological role, involved in peptide bond synthesis. Stimulates efficient translation and peptide-bond synthesis on native or reconstituted 70S ribosomes in vitro. Probably functions indirectly by altering the affinity of the ribosome for aminoacyl-tRNA, thus increasing their reactivity as acceptors for peptidyl transferase. This chain is Elongation factor P, found in Burkholderia lata (strain ATCC 17760 / DSM 23089 / LMG 22485 / NCIMB 9086 / R18194 / 383).